The following is a 342-amino-acid chain: GTPase Obg (342 aa).

The Obg domain maps to 1–159 (MKFLDLCKVY…RTIWLRLKLI (159 aa)). The OBG-type G domain occupies 160–327 (ADAGLLGLPN…VLRALWAEID (168 aa)). GTP-binding positions include 166–173 (GLPNAGKS), 191–195 (FTTLV), 212–215 (DIPG), 279–282 (NKID), and 308–310 (SGV). S173 and T193 together coordinate Mg(2+).

The protein belongs to the TRAFAC class OBG-HflX-like GTPase superfamily. OBG GTPase family. Monomer. Mg(2+) serves as cofactor.

Its subcellular location is the cytoplasm. An essential GTPase which binds GTP, GDP and possibly (p)ppGpp with moderate affinity, with high nucleotide exchange rates and a fairly low GTP hydrolysis rate. Plays a role in control of the cell cycle, stress response, ribosome biogenesis and in those bacteria that undergo differentiation, in morphogenesis control. The polypeptide is GTPase Obg (Cereibacter sphaeroides (strain ATCC 17025 / ATH 2.4.3) (Rhodobacter sphaeroides)).